The sequence spans 753 residues: 5-methyltetrahydropteroyltriglutamate--homocysteine methyltransferase (753 aa).

Residues 17–20 and lysine 117 contribute to the 5-methyltetrahydropteroyltri-L-glutamate site; that span reads RELK. L-homocysteine is bound by residues 431–433 and glutamate 484; that span reads IGS. L-methionine is bound by residues 431–433 and glutamate 484; that span reads IGS. Residues 515 to 516 and tryptophan 561 each bind 5-methyltetrahydropteroyltri-L-glutamate; that span reads RC. Residue aspartate 599 participates in L-homocysteine binding. Aspartate 599 contacts L-methionine. 5-methyltetrahydropteroyltri-L-glutamate is bound at residue glutamate 605. Positions 641, 643, and 665 each coordinate Zn(2+). Histidine 694 serves as the catalytic Proton donor. Cysteine 726 lines the Zn(2+) pocket.

It belongs to the vitamin-B12 independent methionine synthase family. Zn(2+) is required as a cofactor.

It catalyses the reaction 5-methyltetrahydropteroyltri-L-glutamate + L-homocysteine = tetrahydropteroyltri-L-glutamate + L-methionine. It functions in the pathway amino-acid biosynthesis; L-methionine biosynthesis via de novo pathway; L-methionine from L-homocysteine (MetE route): step 1/1. Its function is as follows. Catalyzes the transfer of a methyl group from 5-methyltetrahydrofolate to homocysteine resulting in methionine formation. The sequence is that of 5-methyltetrahydropteroyltriglutamate--homocysteine methyltransferase from Shigella boydii serotype 4 (strain Sb227).